Consider the following 292-residue polypeptide: Protein/nucleic acid deglycase HchA (292 aa).

The segment covering 1-12 (MSQDVNELSKQP) has biased composition (polar residues). The disordered stretch occupies residues 1-23 (MSQDVNELSKQPTPDKAEDNAFF). The Nucleophile role is filled by Cys190.

It belongs to the peptidase C56 family. HchA subfamily.

Its subcellular location is the cytoplasm. The catalysed reaction is N(omega)-(1-hydroxy-2-oxopropyl)-L-arginyl-[protein] + H2O = lactate + L-arginyl-[protein] + H(+). The enzyme catalyses N(6)-(1-hydroxy-2-oxopropyl)-L-lysyl-[protein] + H2O = lactate + L-lysyl-[protein] + H(+). It carries out the reaction S-(1-hydroxy-2-oxopropyl)-L-cysteinyl-[protein] + H2O = lactate + L-cysteinyl-[protein] + H(+). It catalyses the reaction N(omega)-(1-hydroxy-2-oxoethyl)-L-arginyl-[protein] + H2O = L-arginyl-[protein] + glycolate + H(+). The catalysed reaction is N(6)-(1-hydroxy-2-oxoethyl)-L-lysyl-[protein] + H2O = glycolate + L-lysyl-[protein] + H(+). The enzyme catalyses S-(1-hydroxy-2-oxoethyl)-L-cysteinyl-[protein] + H2O = glycolate + L-cysteinyl-[protein] + H(+). It carries out the reaction N(2)-(1-hydroxy-2-oxopropyl)-dGTP + H2O = lactate + dGTP + H(+). It catalyses the reaction N(2)-(1-hydroxy-2-oxopropyl)-GTP + H2O = lactate + GTP + H(+). The catalysed reaction is N(2)-(1-hydroxy-2-oxopropyl)-GDP + H2O = lactate + GDP + H(+). The enzyme catalyses N(2)-(1-hydroxy-2-oxopropyl)-GMP + H2O = lactate + GMP + H(+). It carries out the reaction N(2)-(1-hydroxy-2-oxoethyl)-dGTP + H2O = dGTP + glycolate + H(+). It catalyses the reaction N(2)-(1-hydroxy-2-oxoethyl)-GTP + H2O = glycolate + GTP + H(+). The catalysed reaction is N(2)-(1-hydroxy-2-oxoethyl)-GDP + H2O = glycolate + GDP + H(+). The enzyme catalyses N(2)-(1-hydroxy-2-oxoethyl)-GMP + H2O = glycolate + GMP + H(+). It carries out the reaction an N(2)-(1-hydroxy-2-oxopropyl)-guanosine in RNA + H2O = a guanosine in RNA + lactate + H(+). It catalyses the reaction an N(2)-(1-hydroxy-2-oxopropyl)-2'-deoxyguanosine in DNA + H2O = a 2'-deoxyguanosine in DNA + lactate + H(+). The catalysed reaction is an N(2)-(1-hydroxy-2-oxoethyl)-guanosine in RNA + H2O = a guanosine in RNA + glycolate + H(+). The enzyme catalyses an N(2)-(1-hydroxy-2-oxoethyl)-2'-deoxyguanosine in DNA + H2O = a 2'-deoxyguanosine in DNA + glycolate + H(+). Its function is as follows. Protein and nucleotide deglycase that catalyzes the deglycation of the Maillard adducts formed between amino groups of proteins or nucleotides and reactive carbonyl groups of glyoxals. Thus, functions as a protein deglycase that repairs methylglyoxal- and glyoxal-glycated proteins, and releases repaired proteins and lactate or glycolate, respectively. Deglycates cysteine, arginine and lysine residues in proteins, and thus reactivates these proteins by reversing glycation by glyoxals. Acts on early glycation intermediates (hemithioacetals and aminocarbinols), preventing the formation of Schiff bases and advanced glycation endproducts (AGE). Also functions as a nucleotide deglycase able to repair glycated guanine in the free nucleotide pool (GTP, GDP, GMP, dGTP) and in DNA and RNA. Is thus involved in a major nucleotide repair system named guanine glycation repair (GG repair), dedicated to reversing methylglyoxal and glyoxal damage via nucleotide sanitization and direct nucleic acid repair. Plays an important role in protecting cells from carbonyl stress. The sequence is that of Protein/nucleic acid deglycase HchA from Staphylococcus aureus (strain bovine RF122 / ET3-1).